The chain runs to 87 residues: Small ribosomal subunit protein uS17 (87 aa).

This sequence belongs to the universal ribosomal protein uS17 family. As to quaternary structure, part of the 30S ribosomal subunit.

Functionally, one of the primary rRNA binding proteins, it binds specifically to the 5'-end of 16S ribosomal RNA. This chain is Small ribosomal subunit protein uS17, found in Geobacillus kaustophilus (strain HTA426).